The sequence spans 171 residues: Peptide methionine sulfoxide reductase MsrA (171 aa).

Residue Cys-13 is part of the active site.

It belongs to the MsrA Met sulfoxide reductase family.

It catalyses the reaction L-methionyl-[protein] + [thioredoxin]-disulfide + H2O = L-methionyl-(S)-S-oxide-[protein] + [thioredoxin]-dithiol. It carries out the reaction [thioredoxin]-disulfide + L-methionine + H2O = L-methionine (S)-S-oxide + [thioredoxin]-dithiol. Its function is as follows. Has an important function as a repair enzyme for proteins that have been inactivated by oxidation. Catalyzes the reversible oxidation-reduction of methionine sulfoxide in proteins to methionine. In Mycolicibacterium paratuberculosis (strain ATCC BAA-968 / K-10) (Mycobacterium paratuberculosis), this protein is Peptide methionine sulfoxide reductase MsrA.